Consider the following 120-residue polypeptide: Large ribosomal subunit protein uL18 (120 aa).

Positions 1 to 29 (MITKPNKNAGRKKRHAHVRRTLSGTPQRP) are disordered. Basic residues predominate over residues 9–20 (AGRKKRHAHVRR).

The protein belongs to the universal ribosomal protein uL18 family. As to quaternary structure, part of the 50S ribosomal subunit; part of the 5S rRNA/L5/L18/L25 subcomplex. Contacts the 5S and 23S rRNAs.

This is one of the proteins that bind and probably mediate the attachment of the 5S RNA into the large ribosomal subunit, where it forms part of the central protuberance. The protein is Large ribosomal subunit protein uL18 of Shouchella clausii (strain KSM-K16) (Alkalihalobacillus clausii).